A 303-amino-acid chain; its full sequence is Probable cell division protein WhiA (303 aa).

The H-T-H motif DNA-binding region spans 272-303 (SIQQLADSLSKPLTKSGVNHRLRKINKIADEL).

Belongs to the WhiA family.

Functionally, involved in cell division and chromosome segregation. This is Probable cell division protein WhiA from Streptococcus gordonii (strain Challis / ATCC 35105 / BCRC 15272 / CH1 / DL1 / V288).